Reading from the N-terminus, the 234-residue chain is UPF0173 metal-dependent hydrolase Atu1317 (234 aa).

Belongs to the UPF0173 family.

This chain is UPF0173 metal-dependent hydrolase Atu1317, found in Agrobacterium fabrum (strain C58 / ATCC 33970) (Agrobacterium tumefaciens (strain C58)).